We begin with the raw amino-acid sequence, 235 residues long: Type III pantothenate kinase (235 aa).

Position 6 to 13 (6 to 13 (DVGNTSLK)) interacts with ATP. Substrate contacts are provided by residues tyrosine 79 and 86 to 89 (GIDR). Aspartate 88 acts as the Proton acceptor in catalysis. Residue aspartate 109 coordinates K(+). Position 112 (threonine 112) interacts with ATP. Threonine 164 is a substrate binding site.

The protein belongs to the type III pantothenate kinase family. Homodimer. Requires NH4(+) as cofactor. It depends on K(+) as a cofactor.

The protein resides in the cytoplasm. The enzyme catalyses (R)-pantothenate + ATP = (R)-4'-phosphopantothenate + ADP + H(+). Its pathway is cofactor biosynthesis; coenzyme A biosynthesis; CoA from (R)-pantothenate: step 1/5. Catalyzes the phosphorylation of pantothenate (Pan), the first step in CoA biosynthesis. The protein is Type III pantothenate kinase of Pseudoalteromonas translucida (strain TAC 125).